Here is a 639-residue protein sequence, read N- to C-terminus: AP2-like ethylene-responsive transcription factor CRL5 (639 aa).

Disordered regions lie at residues 25–59 (PHMA…QQQH) and 258–277 (GRKR…HHRK). The segment covering 43 to 59 (QQQQQQQQQQHHQQQQH) has biased composition (low complexity). 2 consecutive DNA-binding regions (AP2/ERF) follow at residues 288–351 (QYRG…INFP) and 387–445 (MYRG…TNFD). Residues 547-561 (QQQQQHMSMSAASSL) show a composition bias toward low complexity. Positions 547–579 (QQQQQHMSMSAASSLVTSLSNSREGSPDRGGGL) are disordered.

This sequence belongs to the AP2/ERF transcription factor family. AP2 subfamily. Highly expressed at the base of the stem. Expressed in stems. Expressed a low levels in crown roots and seeds. Expressed in the stem region where adventitious (crown) root initiation occurs.

Its subcellular location is the nucleus. Its function is as follows. Acts as a positive regulator of adventitious (crown) root formation by promoting its initiation. Promotes adventitious root initiation through repression of cytokinin signaling by positively regulating the two-component response regulator RR1. Regulated by the auxin response factor and transcriptional activator ARF23/ARF1. This is AP2-like ethylene-responsive transcription factor CRL5 from Oryza sativa subsp. japonica (Rice).